The primary structure comprises 338 residues: Lipoate-protein ligase A (338 aa).

Residues 29–216 enclose the BPL/LPL catalytic domain; that stretch reads PATQRVLFLW…AFFAHYGERV (188 aa). Residues Arg-71, 76–79, and Lys-134 contribute to the ATP site; that span reads GAVF. Lys-134 contacts (R)-lipoate.

The protein belongs to the LplA family. In terms of assembly, monomer.

It is found in the cytoplasm. The catalysed reaction is L-lysyl-[lipoyl-carrier protein] + (R)-lipoate + ATP = N(6)-[(R)-lipoyl]-L-lysyl-[lipoyl-carrier protein] + AMP + diphosphate + H(+). Its pathway is protein modification; protein lipoylation via exogenous pathway; protein N(6)-(lipoyl)lysine from lipoate: step 1/2. It participates in protein modification; protein lipoylation via exogenous pathway; protein N(6)-(lipoyl)lysine from lipoate: step 2/2. In terms of biological role, catalyzes both the ATP-dependent activation of exogenously supplied lipoate to lipoyl-AMP and the transfer of the activated lipoyl onto the lipoyl domains of lipoate-dependent enzymes. The protein is Lipoate-protein ligase A of Escherichia coli O8 (strain IAI1).